A 442-amino-acid polypeptide reads, in one-letter code: Histidinol dehydrogenase (442 aa).

NAD(+) is bound by residues Tyr-142, Gln-204, and Asn-227. 3 residues coordinate substrate: Ser-250, Gln-272, and His-275. Gln-272 and His-275 together coordinate Zn(2+). Catalysis depends on proton acceptor residues Glu-340 and His-341. 4 residues coordinate substrate: His-341, Asp-374, Glu-428, and His-433. Asp-374 contacts Zn(2+). His-433 serves as a coordination point for Zn(2+).

The protein belongs to the histidinol dehydrogenase family. Zn(2+) serves as cofactor.

It catalyses the reaction L-histidinol + 2 NAD(+) + H2O = L-histidine + 2 NADH + 3 H(+). The protein operates within amino-acid biosynthesis; L-histidine biosynthesis; L-histidine from 5-phospho-alpha-D-ribose 1-diphosphate: step 9/9. Its function is as follows. Catalyzes the sequential NAD-dependent oxidations of L-histidinol to L-histidinaldehyde and then to L-histidine. This Prochlorococcus marinus (strain MIT 9313) protein is Histidinol dehydrogenase.